The following is a 324-amino-acid chain: Lipid droplet-associated hydrolase (324 aa).

Residue serine 136 is the Nucleophile of the active site. Residues aspartate 270 and histidine 299 each act as charge relay system in the active site.

Belongs to the AB hydrolase superfamily. LDAH family.

The protein localises to the lipid droplet. The protein resides in the endoplasmic reticulum. It carries out the reaction a cholesterol ester + H2O = cholesterol + a fatty acid + H(+). Probable serine lipid hydrolase associated with lipid droplets. Has low cholesterol esterase activity. Appears to lack triglyceride lipase activity. Involved in cholesterol and triglyceride homeostasis; stimulates cellular triglyceride accumulation and cellular cholesterol release. The chain is Lipid droplet-associated hydrolase from Gallus gallus (Chicken).